The following is a 204-amino-acid chain: Peptide deformylase (204 aa).

Cys131 and His174 together coordinate Fe cation. Residue Glu175 is part of the active site. Position 178 (His178) interacts with Fe cation.

It belongs to the polypeptide deformylase family. Requires Fe(2+) as cofactor.

It catalyses the reaction N-terminal N-formyl-L-methionyl-[peptide] + H2O = N-terminal L-methionyl-[peptide] + formate. Removes the formyl group from the N-terminal Met of newly synthesized proteins. Requires at least a dipeptide for an efficient rate of reaction. N-terminal L-methionine is a prerequisite for activity but the enzyme has broad specificity at other positions. In Streptococcus pyogenes serotype M18 (strain MGAS8232), this protein is Peptide deformylase.